The following is a 663-amino-acid chain: Alpha-amylase MalA (663 aa).

2 disordered regions span residues 1–28 (MHHP…PTAT) and 80–135 (GTLE…LTLR). Gly residues predominate over residues 92-111 (RSGGHSGGVSGGRSGPGRSG). The active-site Nucleophile is the D411. E440 acts as the Proton donor in catalysis.

The protein belongs to the glycosyl hydrolase 13 family.

The protein resides in the cytoplasm. It carries out the reaction Endohydrolysis of (1-&gt;4)-alpha-D-glucosidic linkages in polysaccharides containing three or more (1-&gt;4)-alpha-linked D-glucose units.. Its pathway is glycan degradation; starch degradation. Stable and active over a broad range of NaCl concentrations (0.5 to 4.2 M NaCl), with maximal activity at 2.6 M NaCl. 83% and 94% of the maximum activity at 0.6 and 4.2 M NaCl, respectively. Active and stable also in KCl. Its function is as follows. Alpha-amylase that cleaves starch into oligosaccharides, the first step in starch degradation. Endo-acting enzyme which prefers a linear polysaccharide to branched polysaccharides hydrolyzing alpha-1,4 glucosidic bonds efficiently. Also has transglycosylation activity, but does not act on alpha-1,6 bonds. Higher activities of 100%, 79% and 67.8% against amylose, soluble starch and amylopectin, respectively. Lower activity of 22% against glycogen and faint or no activity against alpha-, beta- and gamma-cyclodextrin. In Haloarcula japonica (strain ATCC 49778 / DSM 6131 / JCM 7785 / NBRC 101032 / NCIMB 13157 / TR-1), this protein is Alpha-amylase MalA.